Reading from the N-terminus, the 369-residue chain is Ubiquitin-conjugating enzyme E2 Q2 (369 aa).

Residues 117 to 143 (DQPLPTGQNGTTEEVTSEEEEEEEMAE) form a disordered region. Positions 131–143 (VTSEEEEEEEMAE) are enriched in acidic residues. Residues 198-362 (QASDRLMKEL…VQIHEKNGWY (165 aa)) form the UBC core domain. The active-site Glycyl thioester intermediate is Cys-298.

This sequence belongs to the ubiquitin-conjugating enzyme family. In terms of processing, auto-ubiquitinated in vitro. In terms of tissue distribution, detected at embryo implantation sites in the luminal epithelium of pregnant endometrium. Detected at low levels in ovary and liver.

It is found in the cytoplasm. It carries out the reaction S-ubiquitinyl-[E1 ubiquitin-activating enzyme]-L-cysteine + [E2 ubiquitin-conjugating enzyme]-L-cysteine = [E1 ubiquitin-activating enzyme]-L-cysteine + S-ubiquitinyl-[E2 ubiquitin-conjugating enzyme]-L-cysteine.. It participates in protein modification; protein ubiquitination. In terms of biological role, accepts ubiquitin from the E1 complex and catalyzes its covalent attachment to other proteins. In vitro catalyzes 'Lys-48'-linked polyubiquitination. The polypeptide is Ubiquitin-conjugating enzyme E2 Q2 (UBE2Q2) (Oryctolagus cuniculus (Rabbit)).